We begin with the raw amino-acid sequence, 346 residues long: UDP-N-acetylenolpyruvoylglucosamine reductase (346 aa).

The FAD-binding PCMH-type domain maps to 18–189 (LRAQARAFIA…VSVVFALKTH (172 aa)). Residue R165 is part of the active site. S240 (proton donor) is an active-site residue. Residue E336 is part of the active site.

It belongs to the MurB family. FAD serves as cofactor.

Its subcellular location is the cytoplasm. The enzyme catalyses UDP-N-acetyl-alpha-D-muramate + NADP(+) = UDP-N-acetyl-3-O-(1-carboxyvinyl)-alpha-D-glucosamine + NADPH + H(+). The protein operates within cell wall biogenesis; peptidoglycan biosynthesis. In terms of biological role, cell wall formation. This is UDP-N-acetylenolpyruvoylglucosamine reductase from Neisseria meningitidis serogroup B (strain ATCC BAA-335 / MC58).